The primary structure comprises 288 residues: uncharacterized protein (288 aa).

Positions 1-59 (MDKLNAISIFCKVIETQSFTLAAKQQNISVAMASKLVSQLEEHLKTRLLQRTTRKIMPT) constitute an HTH lysR-type domain. Residues 19-38 (FTLAAKQQNISVAMASKLVS) constitute a DNA-binding region (H-T-H motif).

Belongs to the LysR transcriptional regulatory family.

This is an uncharacterized protein from Haemophilus influenzae (strain ATCC 51907 / DSM 11121 / KW20 / Rd).